The sequence spans 227 residues: tRNA (guanine-N(1)-)-methyltransferase (227 aa).

S-adenosyl-L-methionine contacts are provided by residues glycine 112 and 131–136 (LGDFVL).

This sequence belongs to the RNA methyltransferase TrmD family. As to quaternary structure, homodimer.

The protein resides in the cytoplasm. The enzyme catalyses guanosine(37) in tRNA + S-adenosyl-L-methionine = N(1)-methylguanosine(37) in tRNA + S-adenosyl-L-homocysteine + H(+). In terms of biological role, specifically methylates guanosine-37 in various tRNAs. This is tRNA (guanine-N(1)-)-methyltransferase from Trichodesmium erythraeum (strain IMS101).